A 483-amino-acid chain; its full sequence is Serine protease HTRA4 (483 aa).

The signal sequence occupies residues 1–30 (MSFQRLWAVRTQFLLLWLLLPAVPVPWAEA). The region spanning 35-113 (VSLPCPDACD…GAWLGTCGCA (79 aa)) is the IGFBP N-terminal domain. 6 disulfide bridges follow: Cys39–Cys65, Cys43–Cys67, Cys48–Cys68, Cys54–Cys71, Cys79–Cys93, and Cys87–Cys110. Residues 208–368 (GSGFIVSEDG…IPSDRIRQFL (161 aa)) are serine protease. Residues His224, Asp254, and Ser332 each act as charge relay system in the active site. One can recognise a PDZ domain in the interval 379-471 (KAPLQKKYLG…LSIIVLRGSQ (93 aa)).

The protein belongs to the peptidase S1C family.

It is found in the secreted. Serine protease. The sequence is that of Serine protease HTRA4 (Htra4) from Mus musculus (Mouse).